The primary structure comprises 294 residues: Pyridoxal 5'-phosphate synthase subunit PdxS (294 aa).

A D-ribose 5-phosphate-binding site is contributed by Asp24. The Schiff-base intermediate with D-ribose 5-phosphate role is filled by Lys81. D-ribose 5-phosphate is bound at residue Gly153. Arg165 contacts D-glyceraldehyde 3-phosphate. D-ribose 5-phosphate is bound by residues Gly214 and 235–236 (GS).

This sequence belongs to the PdxS/SNZ family. As to quaternary structure, in the presence of PdxT, forms a dodecamer of heterodimers.

It carries out the reaction aldehydo-D-ribose 5-phosphate + D-glyceraldehyde 3-phosphate + L-glutamine = pyridoxal 5'-phosphate + L-glutamate + phosphate + 3 H2O + H(+). Its pathway is cofactor biosynthesis; pyridoxal 5'-phosphate biosynthesis. Its function is as follows. Catalyzes the formation of pyridoxal 5'-phosphate from ribose 5-phosphate (RBP), glyceraldehyde 3-phosphate (G3P) and ammonia. The ammonia is provided by the PdxT subunit. Can also use ribulose 5-phosphate and dihydroxyacetone phosphate as substrates, resulting from enzyme-catalyzed isomerization of RBP and G3P, respectively. The sequence is that of Pyridoxal 5'-phosphate synthase subunit PdxS from Bacillus velezensis (strain DSM 23117 / BGSC 10A6 / LMG 26770 / FZB42) (Bacillus amyloliquefaciens subsp. plantarum).